The following is a 103-amino-acid chain: Large ribosomal subunit protein bL21 (103 aa).

The protein belongs to the bacterial ribosomal protein bL21 family. In terms of assembly, part of the 50S ribosomal subunit. Contacts protein L20.

Its function is as follows. This protein binds to 23S rRNA in the presence of protein L20. This chain is Large ribosomal subunit protein bL21, found in Alteromonas mediterranea (strain DSM 17117 / CIP 110805 / LMG 28347 / Deep ecotype).